We begin with the raw amino-acid sequence, 264 residues long: Regulatory protein RecX (264 aa).

It belongs to the RecX family.

It localises to the cytoplasm. Functionally, negatively modulates RecA activity. The chain is Regulatory protein RecX from Bacillus subtilis (strain 168).